An 853-amino-acid chain; its full sequence is E3 ubiquitin-protein ligase RNF216 (853 aa).

3 disordered regions span residues 33–102 (TISD…DDIV), 125–152 (PLEV…ASVD), and 165–228 (PYFQ…AHPL). The segment covering 53-73 (QQEDDLDDDVILTEDDSEDEY) has biased composition (acidic residues). Lys89 participates in a covalent cross-link: Glycyl lysine isopeptide (Lys-Gly) (interchain with G-Cter in SUMO2). Glycyl lysine isopeptide (Lys-Gly) (interchain with G-Cter in SUMO2) cross-links involve residues Lys339 and Lys342. Phosphoserine is present on Ser407. Residues Lys413, Lys418, Lys436, Lys447, and Lys473 each participate in a glycyl lysine isopeptide (Lys-Gly) (interchain with G-Cter in SUMO2) cross-link. Residues 463 to 479 (VKQEQEFYEQKIKEMAE) adopt a coiled-coil conformation. The segment at 499 to 716 (QLIECRCCYG…SPGAPCQECS (218 aa)) is TRIAD supradomain. Residues Cys503, Cys506, Cys525, Cys528, Cys593, and Cys596 each contribute to the Zn(2+) site. Residues 503–552 (CRCCYGEFPFEELTQCADAHLFCKECLIRYAQEAVFGSGKSELSCMEGSC) form an RING-type 1 zinc finger. Residues 571–636 (YKYYERKAEE…LWKEHNGLTC (66 aa)) form an IBR-type zinc finger. Lys607 is covalently cross-linked (Glycyl lysine isopeptide (Lys-Gly) (interchain with G-Cter in SUMO2)). Cys611, Cys616, Cys621, Cys624, His631, and Cys636 together coordinate Zn(2+). Residues Lys646 and Lys654 each participate in a glycyl lysine isopeptide (Lys-Gly) (interchain with G-Cter in SUMO2) cross-link. Zn(2+) is bound by residues Cys663 and Cys666. Residues 663 to 691 (CHKCGTGLIKSEGCNRMSCRCGAQMCYLC) form an RING-type 2; atypical zinc finger. Cys676 is a catalytic residue. Residues Cys681, Cys683, Cys688, Cys691, His704, and Cys712 each contribute to the Zn(2+) site. Residues 725–751 (TEDDEKLIEEIQKEAEEEQKRKNGENT) are a coiled coil. Glycyl lysine isopeptide (Lys-Gly) (interchain with G-Cter in SUMO2) cross-links involve residues Lys753 and Lys761.

In terms of assembly, interacts with UBE2L3 and to some extent with UBE2L6. Interacts with TRAF3, TLR3, TLR4, TLR5 and TLR9. Isoform 3/ZIN binds RIPK1. Auto-ubiquitinated. Post-translationally, phosphorylation at Ser-719 enhances acceptor ubiquitin binding and chain-type specificity towards 'Lys-63' di-ubiquitin but not di-ubiquitin with other linkage types.

It localises to the cytoplasm. It is found in the cytoplasmic vesicle. The protein localises to the clathrin-coated vesicle. The enzyme catalyses S-ubiquitinyl-[E2 ubiquitin-conjugating enzyme]-L-cysteine + [acceptor protein]-L-lysine = [E2 ubiquitin-conjugating enzyme]-L-cysteine + N(6)-ubiquitinyl-[acceptor protein]-L-lysine.. It functions in the pathway protein modification; protein ubiquitination. Its activity is regulated as follows. Allosterically activated by 'Lys-63'-linked di-ubiquitin. Functionally, E3 ubiquitin ligase which accepts ubiquitin from specific E2 ubiquitin-conjugating enzymes, and then transfers it to substrates promoting their ubiquitination. Plays a role in the regulation of antiviral responses by promoting the degradation of TRAF3, TLR4 and TLR9. In turn, down-regulates NF-kappa-B and IRF3 activation as well as beta interferon production. Also participates in the regulation of autophagy by ubiquitinating BECN1 leading to its degradation and autophagy inhibition. Plays a role in ARC-dependent synaptic plasticity by mediating ARC ubiquitination resulting in its rapid proteasomal degradation. Plays aso an essential role in spermatogenesis and male fertility. Mechanistically, regulates meiosis by promoting the degradation of PRKACB through the ubiquitin-mediated lysosome pathway. Modulates the gonadotropin-releasing hormone signal pathway by affecting the stability of STAU2 that is required for the microtubule-dependent transport of neuronal RNA from the cell body to the dendrite. This Mus musculus (Mouse) protein is E3 ubiquitin-protein ligase RNF216 (Rnf216).